A 712-amino-acid chain; its full sequence is Ribosomal RNA large subunit methyltransferase K/L (712 aa).

The region spanning 46 to 157 is the THUMP domain; it reads GAYQALLHSR…RENMVVSLDL (112 aa).

It belongs to the methyltransferase superfamily. RlmKL family.

The protein localises to the cytoplasm. It catalyses the reaction guanosine(2445) in 23S rRNA + S-adenosyl-L-methionine = N(2)-methylguanosine(2445) in 23S rRNA + S-adenosyl-L-homocysteine + H(+). The enzyme catalyses guanosine(2069) in 23S rRNA + S-adenosyl-L-methionine = N(2)-methylguanosine(2069) in 23S rRNA + S-adenosyl-L-homocysteine + H(+). Functionally, specifically methylates the guanine in position 2445 (m2G2445) and the guanine in position 2069 (m7G2069) of 23S rRNA. This chain is Ribosomal RNA large subunit methyltransferase K/L, found in Actinobacillus pleuropneumoniae serotype 5b (strain L20).